A 240-amino-acid chain; its full sequence is Probable transcriptional regulatory protein HPG27_148 (240 aa).

Belongs to the TACO1 family.

It is found in the cytoplasm. This is Probable transcriptional regulatory protein HPG27_148 from Helicobacter pylori (strain G27).